The primary structure comprises 143 residues: Nucleoside diphosphate kinase (143 aa).

Positions 11, 59, 87, 93, 104, and 114 each coordinate ATP. The Pros-phosphohistidine intermediate role is filled by H117.

The protein belongs to the NDK family. In terms of assembly, homotetramer. Mg(2+) serves as cofactor.

Its subcellular location is the cytoplasm. It catalyses the reaction a 2'-deoxyribonucleoside 5'-diphosphate + ATP = a 2'-deoxyribonucleoside 5'-triphosphate + ADP. The enzyme catalyses a ribonucleoside 5'-diphosphate + ATP = a ribonucleoside 5'-triphosphate + ADP. Functionally, major role in the synthesis of nucleoside triphosphates other than ATP. The ATP gamma phosphate is transferred to the NDP beta phosphate via a ping-pong mechanism, using a phosphorylated active-site intermediate. In Idiomarina loihiensis (strain ATCC BAA-735 / DSM 15497 / L2-TR), this protein is Nucleoside diphosphate kinase.